Reading from the N-terminus, the 579-residue chain is MVEQTKDQLSAFHYHMLDFLLTKSEKVTFTDSFIWLTSAIQTYFSTLCVSLTPSPSDFVTKLADGEARFSASKINASCYLIEDGSGRRFHLACRQDEEIPEGLPDVVASFLNQSMKQERLYNKTIYQKKIYKMTELFHSLLDQTDVLKQLLESLTSTFSLFEFSLFISHDQDQCLGIPAKELYMEGEKSDSFALKVYLSGDILRKNESVAYIPIKGQQGTYGVLKAEGTGDSFLTDACLDEMSLLANAAGKAFENAQLYEQSKASIANLELINETSRRLNQRLTLTDTMNDLAVRMAESFQAEEVGFFHIDHFENLTLLPGSTAFFKEAKPSDFYNELKEKLYEGEKGVFIGNGQSVFGKAGYGSLMAAPMIQNDRLLGFAVLLKQELYAFTFEMYKLFQALIHHATLAVTNSMLRDRLEHLVKTDQLTELYSRAYLDEKIQYSMKIHQKGVFILVDIDNFKNVNDTYGHQTGDEILIQVASVIKSNIRKHDVGARWGGEELAIYLPNVPVAVGKRITERLVYAVRKNTKPEVTISCGISCWTTETKKSLKELVHEADEALYSAKRSGKNRLMIHDSIK.

Residues 449-577 (QKGVFILVDI…GKNRLMIHDS (129 aa)) form the GGDEF domain.

This is an uncharacterized protein from Bacillus subtilis (strain 168).